We begin with the raw amino-acid sequence, 241 residues long: uncharacterized protein (241 aa).

Transmembrane regions (helical) follow at residues 1 to 21 (MMMA…GILL), 43 to 63 (FPII…LKNL), 75 to 95 (LPIY…FYAI), 108 to 128 (IYVL…VLML), 160 to 180 (VLTS…HGLL), and 200 to 220 (ILVI…IASG).

To M.jannaschii MJ0871, MJ0880 and MJ1556.

It localises to the cell membrane. This is an uncharacterized protein from Methanocaldococcus jannaschii (strain ATCC 43067 / DSM 2661 / JAL-1 / JCM 10045 / NBRC 100440) (Methanococcus jannaschii).